A 243-amino-acid polypeptide reads, in one-letter code: Peptidyl-tRNA hydrolase (243 aa).

Tyr14 serves as a coordination point for tRNA. His19 (proton acceptor) is an active-site residue. Residues Phe64, Asn66, and Asn112 each contribute to the tRNA site. Positions 184–225 are disordered; sequence AAQTRPAEKAKPLATAKPKEGEARTSGGSVAEVGAPPPSPTG. The segment covering 189 to 206 has biased composition (basic and acidic residues); it reads PAEKAKPLATAKPKEGEA.

The protein belongs to the PTH family. As to quaternary structure, monomer.

The protein localises to the cytoplasm. The catalysed reaction is an N-acyl-L-alpha-aminoacyl-tRNA + H2O = an N-acyl-L-amino acid + a tRNA + H(+). Its function is as follows. Hydrolyzes ribosome-free peptidyl-tRNAs (with 1 or more amino acids incorporated), which drop off the ribosome during protein synthesis, or as a result of ribosome stalling. In terms of biological role, catalyzes the release of premature peptidyl moieties from peptidyl-tRNA molecules trapped in stalled 50S ribosomal subunits, and thus maintains levels of free tRNAs and 50S ribosomes. This Rhodospirillum rubrum (strain ATCC 11170 / ATH 1.1.1 / DSM 467 / LMG 4362 / NCIMB 8255 / S1) protein is Peptidyl-tRNA hydrolase.